The chain runs to 128 residues: Large ribosomal subunit protein bL12 (128 aa).

This sequence belongs to the bacterial ribosomal protein bL12 family. In terms of assembly, homodimer. Part of the ribosomal stalk of the 50S ribosomal subunit. Forms a multimeric L10(L12)X complex, where L10 forms an elongated spine to which 2 to 4 L12 dimers bind in a sequential fashion. Binds GTP-bound translation factors.

Its function is as follows. Forms part of the ribosomal stalk which helps the ribosome interact with GTP-bound translation factors. Is thus essential for accurate translation. The polypeptide is Large ribosomal subunit protein bL12 (Streptomyces antibioticus).